We begin with the raw amino-acid sequence, 263 residues long: L-aspartate dehydrogenase (263 aa).

Residues Ala120 and Asn186 each contribute to the NAD(+) site. The active site involves His216.

The protein belongs to the L-aspartate dehydrogenase family.

The catalysed reaction is L-aspartate + NADP(+) + H2O = oxaloacetate + NH4(+) + NADPH + H(+). It carries out the reaction L-aspartate + NAD(+) + H2O = oxaloacetate + NH4(+) + NADH + H(+). It participates in cofactor biosynthesis; NAD(+) biosynthesis; iminoaspartate from L-aspartate (dehydrogenase route): step 1/1. Its function is as follows. Specifically catalyzes the NAD or NADP-dependent dehydrogenation of L-aspartate to iminoaspartate. The chain is L-aspartate dehydrogenase from Acinetobacter baylyi (strain ATCC 33305 / BD413 / ADP1).